A 268-amino-acid polypeptide reads, in one-letter code: uncharacterized protein (268 aa).

It to M.tuberculosis Rv0025 and Rv0026.

This is an uncharacterized protein from Mycobacterium tuberculosis (strain CDC 1551 / Oshkosh).